Consider the following 110-residue polypeptide: Nucleoid-associated protein KPK_4227 (110 aa).

Residues 1-22 (MFGGKGGLGNLMKQAQQMQDKM) form a disordered region.

The protein belongs to the YbaB/EbfC family. Homodimer.

The protein localises to the cytoplasm. It is found in the nucleoid. In terms of biological role, binds to DNA and alters its conformation. May be involved in regulation of gene expression, nucleoid organization and DNA protection. The sequence is that of Nucleoid-associated protein KPK_4227 from Klebsiella pneumoniae (strain 342).